The chain runs to 143 residues: uncharacterized protein (143 aa).

The next 4 membrane-spanning stretches (helical) occupy residues Leu-7 to Val-29, Phe-52 to Leu-74, Leu-87 to Gly-105, and Trp-120 to Gly-142.

The protein resides in the cell membrane. This is an uncharacterized protein from Aquifex aeolicus (strain VF5).